The chain runs to 185 residues: 3-hexulose-6-phosphate isomerase (185 aa).

The SIS domain maps to 29 to 172; the sequence is LADHILSSHQ…ILKLMEKKGL (144 aa). Residues serine 47 and 86–91 contribute to the substrate site; that span reads SGSGET. The active-site Proton acceptor is glutamate 152.

This sequence belongs to the SIS family. PHI subfamily. Homotetramer.

It carries out the reaction D-arabino-hex-3-ulose 6-phosphate = beta-D-fructose 6-phosphate. The protein operates within one-carbon metabolism; formaldehyde assimilation via RuMP pathway; D-fructose 6-phosphate from D-ribulose 5-phosphate and formaldehyde: step 2/2. Functionally, catalyzes the isomerization between 3-hexulose 6-phosphate and fructose 6-phosphate. Together with HxlA, may act as a formaldehyde detoxification system. This Bacillus subtilis (strain 168) protein is 3-hexulose-6-phosphate isomerase (hxlB).